A 189-amino-acid polypeptide reads, in one-letter code: Phomopsin biosynthesis cluster protein D (189 aa).

It belongs to the oryJ family.

Its function is as follows. Part of the gene cluster that mediates the biosynthesis of the phomopsins, a group of hexapeptide mycotoxins which infects lupins and causes lupinosis disease in livestock. The role of phomC within the phomopsins biosynthesis pathway has still to be determined. The pathway starts with the processing of the precursor phomA by several endopeptidases including kexin proteases as well as the cluster-specific S41 family peptidase phomP1 and the oligopeptidase phomG to produce 10 identical copies of the hexapeptide Tyr-Val-Ile-Pro-Ile-Asp. After being excised from the precursor peptide, the core peptides are cyclized and modified post-translationally by enzymes encoded within the gene cluster. The timing and order of proteolysis of the phomA precursor and PTMs are still unknown. Two tyrosinase-like enzymes, phomQ1 and phomQ2, catalyze the chlorination and hydroxylation of Tyr, respectively. PhomYb, is proposed to be involved in the construction of the macrocyclic structure. The other 4 ustYa family proteins may be involved in PTMs that generate the unique structure of phomopsin A. PhomYa is required for the hydroxylation of C-beta of Tyr. PhomYc, phomYd, and phomYe are responsible for the biosynthesis of 2,3-dehydroisoleucine (dIle), 2,3-dehydroaspartic acid (dAsp), and 3,4-dehydroproline (dPro), respectively. While dIle formation by phomYc is indispensable for the installation of dAsp by phomYd, the order of the other PTMs have not been elucidated yet. Most of the biosynthetic enzymes likely have broad substrate specificity, and thus, there might be a metabolic grid from a precursor to phomopsin A. The enzyme(s) responsible for the biosynthesis of 3,4-dehydrovaline (dVal) have also not been identified yet. Finally, phomM acts as an S-adenosylmethionine-dependent alpha-N-methyltransferase that catalyzes two successive N-methylation reactions, converting N-desmethyl-phomopsin A to phomopsin A and phomopsin A further to an N,N-dimethylated congener called phomopsin E. This is Phomopsin biosynthesis cluster protein D from Diaporthe leptostromiformis (Lupinosis disease fungus).